A 530-amino-acid polypeptide reads, in one-letter code: UDP-N-acetylmuramoyl-L-alanyl-D-glutamate--2,6-diaminopimelate ligase (530 aa).

Residue Leu52 participates in UDP-N-acetyl-alpha-D-muramoyl-L-alanyl-D-glutamate binding. 139–145 serves as a coordination point for ATP; sequence GTSGKTT. Residues 181–182, Ser208, and Arg216 each bind UDP-N-acetyl-alpha-D-muramoyl-L-alanyl-D-glutamate; that span reads TT. Lys248 is subject to N6-carboxylysine. Meso-2,6-diaminopimelate-binding positions include Arg410, 434–437, Gly488, and Glu492; that span reads DNPR. Residues 434–437 carry the Meso-diaminopimelate recognition motif motif; the sequence is DNPR.

It belongs to the MurCDEF family. MurE subfamily. Mg(2+) is required as a cofactor. Carboxylation is probably crucial for Mg(2+) binding and, consequently, for the gamma-phosphate positioning of ATP.

It localises to the cytoplasm. The enzyme catalyses UDP-N-acetyl-alpha-D-muramoyl-L-alanyl-D-glutamate + meso-2,6-diaminopimelate + ATP = UDP-N-acetyl-alpha-D-muramoyl-L-alanyl-gamma-D-glutamyl-meso-2,6-diaminopimelate + ADP + phosphate + H(+). Its pathway is cell wall biogenesis; peptidoglycan biosynthesis. Functionally, catalyzes the addition of meso-diaminopimelic acid to the nucleotide precursor UDP-N-acetylmuramoyl-L-alanyl-D-glutamate (UMAG) in the biosynthesis of bacterial cell-wall peptidoglycan. The polypeptide is UDP-N-acetylmuramoyl-L-alanyl-D-glutamate--2,6-diaminopimelate ligase (Mycobacterium leprae (strain TN)).